A 409-amino-acid polypeptide reads, in one-letter code: Casein kinase I isoform delta-B (409 aa).

Residues 9-277 (YRLGRKIGSG…YLRQLFRNLF (269 aa)) form the Protein kinase domain. Residues 15–23 (IGSGSFGDI) and lysine 38 contribute to the ATP site. Aspartate 128 serves as the catalytic Proton acceptor. Residues 300–315 (TAEEADRERRERDERM) show a composition bias toward basic and acidic residues. The tract at residues 300–409 (TAEEADRERR…NSIPFDHHGK (110 aa)) is disordered. The segment at 317–341 (HSRNPAARGIPAASGRPRPTQDGAP) is autoinhibitory. Polar residues-rich tracts occupy residues 346–358 (TPTS…SSPR) and 380–402 (NVSS…QNSI).

Belongs to the protein kinase superfamily. In terms of assembly, monomer. Interacts with per1 and per2. Component of the circadian core oscillator. Autophosphorylated on serine and threonine residues.

The protein localises to the cytoplasm. The protein resides in the nucleus. It catalyses the reaction L-seryl-[protein] + ATP = O-phospho-L-seryl-[protein] + ADP + H(+). The enzyme catalyses L-threonyl-[protein] + ATP = O-phospho-L-threonyl-[protein] + ADP + H(+). Exhibits substrate-dependent heparin activation. Functionally, casein kinases are operationally defined by their preferential utilization of acidic proteins such as caseins as substrates. Central component of the circadian clock. May act as a negative regulator of circadian rhythmicity by phosphorylating per1 and per2, which may lead to their degradation. Participates in wnt signaling. This chain is Casein kinase I isoform delta-B (csnk1db), found in Danio rerio (Zebrafish).